Here is a 313-residue protein sequence, read N- to C-terminus: tRNA dimethylallyltransferase (313 aa).

11–18 (GPTAGGKT) lines the ATP pocket. 13–18 (TAGGKT) provides a ligand contact to substrate. 3 interaction with substrate tRNA regions span residues 36-39 (DSAL), 160-164 (QRIGR), and 243-248 (RCVGYR).

It belongs to the IPP transferase family. Monomer. It depends on Mg(2+) as a cofactor.

The enzyme catalyses adenosine(37) in tRNA + dimethylallyl diphosphate = N(6)-dimethylallyladenosine(37) in tRNA + diphosphate. Functionally, catalyzes the transfer of a dimethylallyl group onto the adenine at position 37 in tRNAs that read codons beginning with uridine, leading to the formation of N6-(dimethylallyl)adenosine (i(6)A). The chain is tRNA dimethylallyltransferase from Neisseria meningitidis serogroup A / serotype 4A (strain DSM 15465 / Z2491).